The chain runs to 606 residues: Probable potassium transport system protein Kup (606 aa).

12 helical membrane passes run 18-38 (GLVF…VFAL), 46-66 (VFGI…AEYA), 97-117 (LTFV…DGVI), 138-158 (GLHQ…LFVF), 166-186 (VAGA…LSGA), 212-232 (GLAG…GEAL), 247-267 (AWYI…AFII), 287-307 (LYIP…QAMI), 339-359 (IYIG…MLVF), 368-388 (AYGL…ILIL), 395-415 (WKAV…TACL), and 418-438 (LPHG…TILV).

It belongs to the HAK/KUP transporter (TC 2.A.72) family.

It is found in the cell inner membrane. The catalysed reaction is K(+)(in) + H(+)(in) = K(+)(out) + H(+)(out). Functionally, transport of potassium into the cell. Likely operates as a K(+):H(+) symporter. This Trichlorobacter lovleyi (strain ATCC BAA-1151 / DSM 17278 / SZ) (Geobacter lovleyi) protein is Probable potassium transport system protein Kup.